We begin with the raw amino-acid sequence, 228 residues long: Ribose-5-phosphate isomerase A (228 aa).

Substrate is bound by residues 27 to 30 (TGTT), 86 to 89 (DGAD), and 100 to 103 (KGGG). The active-site Proton acceptor is Glu-109. Lys-127 serves as a coordination point for substrate.

Belongs to the ribose 5-phosphate isomerase family. As to quaternary structure, homodimer.

It catalyses the reaction aldehydo-D-ribose 5-phosphate = D-ribulose 5-phosphate. The protein operates within carbohydrate degradation; pentose phosphate pathway; D-ribose 5-phosphate from D-ribulose 5-phosphate (non-oxidative stage): step 1/1. In terms of biological role, catalyzes the reversible conversion of ribose-5-phosphate to ribulose 5-phosphate. The sequence is that of Ribose-5-phosphate isomerase A from Borrelia hermsii (strain HS1 / DAH).